The chain runs to 416 residues: Trehalose synthase (416 aa).

It belongs to the glycosyltransferase group 1 family. Glycosyltransferase 4 subfamily. Homodimer. Requires Mg(2+) as cofactor.

The enzyme catalyses an NDP-alpha-D-glucose + D-glucose = alpha,alpha-trehalose + a ribonucleoside 5'-diphosphate + H(+). With respect to regulation, inhibited by 20 mM Fe(3+) and Mn(2+). Partially inhibited by Zn(2+) and Ni(2+). Activity is slightly enhanced by 2 mM Fe (3+), Mn (2+), Ca(2+) or Li(+) and by 20 mM Mg(2+), Ca(2+) or Li(+). Functionally, synthesizes trehalose from ADP-glucose and glucose. The reaction is reversible, the equilibrium strongly favors trehalose synthesis. This is Trehalose synthase from Rubrobacter xylanophilus (strain DSM 9941 / JCM 11954 / NBRC 16129 / PRD-1).